The chain runs to 346 residues: Dihydroorotase (346 aa).

Positions 17 and 19 each coordinate Zn(2+). Substrate-binding positions include 19–21 and asparagine 45; that span reads HLR. The Zn(2+) site is built by lysine 103, histidine 140, and histidine 178. Lysine 103 is modified (N6-carboxylysine). Histidine 140 contacts substrate. Leucine 223 contacts substrate. Aspartate 251 is a binding site for Zn(2+). Residue aspartate 251 is part of the active site. Residues histidine 255 and alanine 267 each contribute to the substrate site.

This sequence belongs to the metallo-dependent hydrolases superfamily. DHOase family. Class II DHOase subfamily. As to quaternary structure, homodimer. It depends on Zn(2+) as a cofactor.

The catalysed reaction is (S)-dihydroorotate + H2O = N-carbamoyl-L-aspartate + H(+). The protein operates within pyrimidine metabolism; UMP biosynthesis via de novo pathway; (S)-dihydroorotate from bicarbonate: step 3/3. Functionally, catalyzes the reversible cyclization of carbamoyl aspartate to dihydroorotate. The sequence is that of Dihydroorotase from Synechococcus sp. (strain RCC307).